Reading from the N-terminus, the 351-residue chain is Divinyl chlorophyll a/b light-harvesting protein PcbC (351 aa).

6 helical membrane passes run 27-47 (FIAA…AFTL), 64-84 (LICL…GVIT), 89-109 (CTVI…GGLL), 203-223 (VMGG…FHIA), 244-264 (VLSY…FWCA), and 306-326 (LSNV…WHAL).

This sequence belongs to the PsbB/PsbC family. IsiA/Pcb subfamily. The antenna complex consists of divinyl chlorophylls (a and b) and divinyl chlorophyll a/b binding proteins and binds more divinyl chlorophyll b than does the antenna complex from high-light-adapted Prochlorococcus. Requires divinyl chlorophyll a as cofactor. It depends on divinyl chlorophyll b as a cofactor.

It localises to the cellular thylakoid membrane. In terms of biological role, the antenna complex functions as a light receptor, it captures and delivers excitation energy to photosystems II and I. The Prochlorales pcb genes are not related to higher plant LHCs. The sequence is that of Divinyl chlorophyll a/b light-harvesting protein PcbC (pcbC) from Prochlorococcus marinus (strain SARG / CCMP1375 / SS120).